Consider the following 252-residue polypeptide: 5'-nucleotidase SurE (252 aa).

A divalent metal cation is bound by residues Asp-8, Asp-9, Ser-42, and Asn-94.

Belongs to the SurE nucleotidase family. Requires a divalent metal cation as cofactor.

The protein resides in the cytoplasm. It carries out the reaction a ribonucleoside 5'-phosphate + H2O = a ribonucleoside + phosphate. Nucleotidase that shows phosphatase activity on nucleoside 5'-monophosphates. The polypeptide is 5'-nucleotidase SurE (Ehrlichia ruminantium (strain Welgevonden)).